The sequence spans 271 residues: 4-hydroxy-tetrahydrodipicolinate reductase (271 aa).

NAD(+) is bound by residues 11–16 (GGSGRM) and Glu37. Arg38 provides a ligand contact to NADP(+). Residues 101–103 (GTT) and 125–128 (APNM) each bind NAD(+). His158 (proton donor/acceptor) is an active-site residue. (S)-2,3,4,5-tetrahydrodipicolinate is bound at residue His159. The active-site Proton donor is Lys162. 168-169 (GT) contacts (S)-2,3,4,5-tetrahydrodipicolinate.

This sequence belongs to the DapB family.

It is found in the cytoplasm. The catalysed reaction is (S)-2,3,4,5-tetrahydrodipicolinate + NAD(+) + H2O = (2S,4S)-4-hydroxy-2,3,4,5-tetrahydrodipicolinate + NADH + H(+). It catalyses the reaction (S)-2,3,4,5-tetrahydrodipicolinate + NADP(+) + H2O = (2S,4S)-4-hydroxy-2,3,4,5-tetrahydrodipicolinate + NADPH + H(+). It participates in amino-acid biosynthesis; L-lysine biosynthesis via DAP pathway; (S)-tetrahydrodipicolinate from L-aspartate: step 4/4. In terms of biological role, catalyzes the conversion of 4-hydroxy-tetrahydrodipicolinate (HTPA) to tetrahydrodipicolinate. This chain is 4-hydroxy-tetrahydrodipicolinate reductase, found in Shewanella loihica (strain ATCC BAA-1088 / PV-4).